Reading from the N-terminus, the 490-residue chain is Cheilanthifoline synthase (490 aa).

The helical transmembrane segment at 2–22 (EESLWVVTATVVVVFAIAKLL) threads the bilayer. Heme is bound at residue Cys432.

It belongs to the cytochrome P450 family. It depends on heme as a cofactor. In terms of tissue distribution, expressed in roots. Detected in leaves and stems.

Its subcellular location is the endoplasmic reticulum membrane. It carries out the reaction (S)-scoulerine + reduced [NADPH--hemoprotein reductase] + O2 = (S)-cheilanthifoline + oxidized [NADPH--hemoprotein reductase] + 2 H2O + H(+). Its pathway is alkaloid biosynthesis. Functionally, methylenedioxy bridge-forming cytochrome P450 involved in the biosynthesis of isoquinoline alkaloids. Converts (S)-scoulerine into (R,S)-cheilanthifoline. Catalyzes an oxidative reaction that does not incorporate oxygen into the product. The sequence is that of Cheilanthifoline synthase (CYP719A5) from Eschscholzia californica (California poppy).